A 227-amino-acid chain; its full sequence is Cytochrome c oxidase subunit 2 (227 aa).

Residues 1–14 are Mitochondrial intermembrane-facing; it reads MAYPMQLGFQDATS. A helical transmembrane segment spans residues 15 to 45; that stretch reads PIMEELLHFHDHTLMIVFLISSLVLYIISLM. Over 46–59 the chain is Mitochondrial matrix; that stretch reads LTTKLTHTSTMDAQ. A helical transmembrane segment spans residues 60-87; sequence EVETIWTILPAIILILIALPSLRILYMM. Residues 88 to 227 are Mitochondrial intermembrane-facing; sequence DEINNPSLTV…YFEKWSASML (140 aa). Residues His-161, Cys-196, Glu-198, Cys-200, His-204, and Met-207 each coordinate Cu cation. Mg(2+) is bound at residue Glu-198. Position 218 is a phosphotyrosine (Tyr-218).

The protein belongs to the cytochrome c oxidase subunit 2 family. As to quaternary structure, component of the cytochrome c oxidase (complex IV, CIV), a multisubunit enzyme composed of 14 subunits. The complex is composed of a catalytic core of 3 subunits MT-CO1, MT-CO2 and MT-CO3, encoded in the mitochondrial DNA, and 11 supernumerary subunits COX4I, COX5A, COX5B, COX6A, COX6B, COX6C, COX7A, COX7B, COX7C, COX8 and NDUFA4, which are encoded in the nuclear genome. The complex exists as a monomer or a dimer and forms supercomplexes (SCs) in the inner mitochondrial membrane with NADH-ubiquinone oxidoreductase (complex I, CI) and ubiquinol-cytochrome c oxidoreductase (cytochrome b-c1 complex, complex III, CIII), resulting in different assemblies (supercomplex SCI(1)III(2)IV(1) and megacomplex MCI(2)III(2)IV(2)). Found in a complex with TMEM177, COA6, COX18, COX20, SCO1 and SCO2. Interacts with TMEM177 in a COX20-dependent manner. Interacts with COX20. Interacts with COX16. The cofactor is Cu cation.

It localises to the mitochondrion inner membrane. It carries out the reaction 4 Fe(II)-[cytochrome c] + O2 + 8 H(+)(in) = 4 Fe(III)-[cytochrome c] + 2 H2O + 4 H(+)(out). Functionally, component of the cytochrome c oxidase, the last enzyme in the mitochondrial electron transport chain which drives oxidative phosphorylation. The respiratory chain contains 3 multisubunit complexes succinate dehydrogenase (complex II, CII), ubiquinol-cytochrome c oxidoreductase (cytochrome b-c1 complex, complex III, CIII) and cytochrome c oxidase (complex IV, CIV), that cooperate to transfer electrons derived from NADH and succinate to molecular oxygen, creating an electrochemical gradient over the inner membrane that drives transmembrane transport and the ATP synthase. Cytochrome c oxidase is the component of the respiratory chain that catalyzes the reduction of oxygen to water. Electrons originating from reduced cytochrome c in the intermembrane space (IMS) are transferred via the dinuclear copper A center (CU(A)) of subunit 2 and heme A of subunit 1 to the active site in subunit 1, a binuclear center (BNC) formed by heme A3 and copper B (CU(B)). The BNC reduces molecular oxygen to 2 water molecules using 4 electrons from cytochrome c in the IMS and 4 protons from the mitochondrial matrix. The sequence is that of Cytochrome c oxidase subunit 2 (MT-CO2) from Boselaphus tragocamelus (Nilgai).